Here is a 457-residue protein sequence, read N- to C-terminus: Chromosomal replication initiator protein DnaA (457 aa).

The interval 1–75 (MDAQLNNLWE…ALKIVTSRKF (75 aa)) is domain I, interacts with DnaA modulators. The domain II stretch occupies residues 75 to 118 (FKIEFYLESDLEEEKENEEKQKEEKKENTNDVDGSIVVSDEMSA). A domain III, AAA+ region region spans residues 119–335 (TLNPKYTFQS…GALIRIIAYS (217 aa)). Positions 163, 165, 166, and 167 each coordinate ATP. The interval 336 to 457 (SLTNRDVSVD…NDITKKLTQK (122 aa)) is domain IV, binds dsDNA.

It belongs to the DnaA family. In terms of assembly, oligomerizes as a right-handed, spiral filament on DNA at oriC.

Its subcellular location is the cytoplasm. Plays an essential role in the initiation and regulation of chromosomal replication. ATP-DnaA binds to the origin of replication (oriC) to initiate formation of the DNA replication initiation complex once per cell cycle. Binds the DnaA box (a 9 base pair repeat at the origin) and separates the double-stranded (ds)DNA. Forms a right-handed helical filament on oriC DNA; dsDNA binds to the exterior of the filament while single-stranded (ss)DNA is stabiized in the filament's interior. The ATP-DnaA-oriC complex binds and stabilizes one strand of the AT-rich DNA unwinding element (DUE), permitting loading of DNA polymerase. After initiation quickly degrades to an ADP-DnaA complex that is not apt for DNA replication. Binds acidic phospholipids. The polypeptide is Chromosomal replication initiator protein DnaA (Clostridium perfringens (strain ATCC 13124 / DSM 756 / JCM 1290 / NCIMB 6125 / NCTC 8237 / Type A)).